We begin with the raw amino-acid sequence, 191 residues long: Adenylate kinase (191 aa).

Residue 12-17 participates in ATP binding; the sequence is GSGKTT. Residues 34 to 63 are NMP; sequence STGDLLRAESAKKTERGLLIEKFTSQGELV. Residues Thr-35, Arg-40, 61 to 63, 88 to 91, and Gln-95 contribute to the AMP site; these read ELV and GYPR. The interval 130–136 is LID; that stretch reads GRSRGAD. Arg-131 lines the ATP pocket. The AMP site is built by Arg-133 and Arg-145. Arg-173 is an ATP binding site.

The protein belongs to the adenylate kinase family. As to quaternary structure, monomer.

It is found in the cytoplasm. It catalyses the reaction AMP + ATP = 2 ADP. It participates in purine metabolism; AMP biosynthesis via salvage pathway; AMP from ADP: step 1/1. Its function is as follows. Catalyzes the reversible transfer of the terminal phosphate group between ATP and AMP. Plays an important role in cellular energy homeostasis and in adenine nucleotide metabolism. This chain is Adenylate kinase, found in Helicobacter pylori (strain HPAG1).